The primary structure comprises 184 residues: Autophagy-related protein 101 (184 aa).

Belongs to the ATG101 family. As to quaternary structure, component of the atg1 kinase complex composed of at least atg1, atg13, atg17 and atg101. Interacts directly with atg13.

The protein localises to the cytoplasm. It is found in the nucleus. It localises to the preautophagosomal structure membrane. In terms of biological role, autophagy factor required for autophagosome formation. Component of the atg1 kinase complex in which it stabilizes atg13. Is also responsible for recruiting downstream factors to the autophagosome-formation site. Has a role in meiosis and sporulation. This chain is Autophagy-related protein 101, found in Schizosaccharomyces pombe (strain 972 / ATCC 24843) (Fission yeast).